A 466-amino-acid polypeptide reads, in one-letter code: UPF0652 protein C16A11.03c (466 aa).

It belongs to the UPF0652 family.

Its subcellular location is the cytoplasm. The protein localises to the nucleus. This Schizosaccharomyces pombe (strain 972 / ATCC 24843) (Fission yeast) protein is UPF0652 protein C16A11.03c.